The following is a 1801-amino-acid chain: Protein mono-ADP-ribosyltransferase PARP14 (1801 aa).

Phosphoserine is present on Ser-33. The interval 109–132 (SKTKEDVKEPDVSEELDTKLPLDG) is disordered. 3 Macro domains span residues 791 to 978 (KCFS…KTVF), 1003 to 1190 (WEKG…ARRA), and 1216 to 1387 (DSGV…KKRE). Residues Asn-824, Leu-833, 922-926 (SSGVF), Asp-961, 1023-1024 (VQ), Ser-1034, 1046-1049 (LSKS), 1133-1137 (GTGNL), 1175-1178 (DHEN), 1235-1236 (DI), Ser-1247, Val-1258, 1332-1336 (GTGNA), and Phe-1371 contribute to the a glycoprotein site. 2 positions are modified to phosphoserine: Ser-1403 and Ser-1411. One can recognise a WWE domain in the interval 1523-1601 (EQESRADCIS…SLSVQRLTKS (79 aa)). In terms of domain architecture, PARP catalytic spans 1605 to 1801 (IPAHWSDMKQ…YPEYLITFRK (197 aa)).

The protein belongs to the ARTD/PARP family. Interacts with STAT6. Interacts with PARP10. Interacts with PARP9 in IFNG-stimulated macrophages; the interaction prevents PARP14-mediated STAT1 and STAT6 ADP-riboslylation. In terms of processing, auto-ADP-ribosylated. Expressed in macrophages.

It localises to the nucleus. Its subcellular location is the cytoplasm. The catalysed reaction is L-glutamyl-[protein] + NAD(+) = 5-O-(ADP-D-ribosyl)-L-glutamyl-[protein] + nicotinamide. Functionally, ADP-ribosyltransferase that mediates mono-ADP-ribosylation of glutamate residues on target proteins. In contrast to PARP1 and PARP2, it is not able to mediate poly-ADP-ribosylation. Has been shown to catalyze the mono-ADP-ribosylation of STAT1 at 'Glu-657' and 'Glu-705', thus decreasing STAT1 phosphorylation which negatively regulates pro-inflammatory cytokine production in macrophages in response to IFNG stimulation. However, the role of ADP-ribosylation in the prevention of STAT1 phosphorylation has been called into question and it has been suggested that the inhibition of phosphorylation may be the result of sumoylation of STAT1 'Lys-703'. Mono-ADP-ribosylates STAT6; enhancing STAT6-dependent transcription. In macrophages, positively regulates MRC1 expression in response to IL4 stimulation by promoting STAT6 phosphorylation. Mono-ADP-ribosylates PARP9. In Homo sapiens (Human), this protein is Protein mono-ADP-ribosyltransferase PARP14.